Here is a 429-residue protein sequence, read N- to C-terminus: Glutamate-1-semialdehyde 2,1-aminomutase 2 (429 aa).

Lys268 carries the N6-(pyridoxal phosphate)lysine modification.

Belongs to the class-III pyridoxal-phosphate-dependent aminotransferase family. HemL subfamily. Homodimer. Requires pyridoxal 5'-phosphate as cofactor.

Its subcellular location is the cytoplasm. It carries out the reaction (S)-4-amino-5-oxopentanoate = 5-aminolevulinate. Its pathway is porphyrin-containing compound metabolism; protoporphyrin-IX biosynthesis; 5-aminolevulinate from L-glutamyl-tRNA(Glu): step 2/2. The polypeptide is Glutamate-1-semialdehyde 2,1-aminomutase 2 (Staphylococcus carnosus (strain TM300)).